The following is a 335-amino-acid chain: Ornithine carbamoyltransferase (335 aa).

Carbamoyl phosphate-binding positions include 56 to 59 (STRT), Gln83, Arg107, and 134 to 137 (HPTQ). L-ornithine contacts are provided by residues Asn168, Asp232, and 236–237 (SM). Carbamoyl phosphate-binding positions include 274–275 (CL) and Arg320.

The protein belongs to the aspartate/ornithine carbamoyltransferase superfamily. OTCase family.

It is found in the cytoplasm. It catalyses the reaction carbamoyl phosphate + L-ornithine = L-citrulline + phosphate + H(+). The protein operates within amino-acid biosynthesis; L-arginine biosynthesis; L-arginine from L-ornithine and carbamoyl phosphate: step 1/3. Its function is as follows. Reversibly catalyzes the transfer of the carbamoyl group from carbamoyl phosphate (CP) to the N(epsilon) atom of ornithine (ORN) to produce L-citrulline. The polypeptide is Ornithine carbamoyltransferase (Pectobacterium atrosepticum (strain SCRI 1043 / ATCC BAA-672) (Erwinia carotovora subsp. atroseptica)).